The sequence spans 237 residues: Sulfolipid-1 exporter Sap (237 aa).

The next 6 membrane-spanning stretches (helical) occupy residues V5 to M25, F38 to G58, F66 to L86, V141 to L161, A171 to S191, and D217 to L237.

This sequence belongs to the peptidoglycolipid addressing protein (GAP) (TC 2.A.116) family.

The protein localises to the cell inner membrane. Functionally, required for the transport across the inner membrane of sulfolipid-1 (SL-1), which is a major cell wall lipid of pathogenic mycobacteria. Could also transport SL1278 (2-palmitoyl-3-(C43)-phthioceranyl-alpha, alpha'-D-trehalose-2'-sulfate), which is the precursor of SL-1. May potentiate SL-1 levels and confer specificity for sulfolipids over structurally similar glycolipids. The protein is Sulfolipid-1 exporter Sap of Mycobacterium tuberculosis (strain ATCC 25618 / H37Rv).